The primary structure comprises 377 residues: UPF0754 membrane protein lmo2224 (377 aa).

The next 2 helical transmembrane spans lie at 1–21 (MSVL…GAMT) and 357–377 (YLGG…AMWI).

It belongs to the UPF0754 family.

It localises to the cell membrane. The polypeptide is UPF0754 membrane protein lmo2224 (Listeria monocytogenes serovar 1/2a (strain ATCC BAA-679 / EGD-e)).